The sequence spans 189 residues: Calcyphosin (189 aa).

4 EF-hand domains span residues 21–56, 57–92, 93–128, and 136–172; these read SGIQGVARFFRRLDQDGSRSLDVRELQRGLAELGLV, LDTAEMEGVCRRWDRDGSGTLDLEEFLRALRPPMSQ, AREAVVTAAFAKLDRSGDGVVTVDDLRGVYSGRTHP, and TEEQVLRHFLDNFDSSEKDGQVTLAEFQDYYSGVSAS. Asp34, Asp36, Ser38, Ser40, Glu45, Asp70, Asp72, Ser74, Thr76, Glu81, Asp106, Ser108, Asp110, and Asp117 together coordinate Ca(2+). Residue Ser40 is modified to Phosphoserine; by PKA.

As to quaternary structure, monomer. Does not form oligomers in the presence of calcium.

The protein resides in the cytoplasm. Calcium-binding protein. May play a role in cellular signaling events (Potential). This chain is Calcyphosin (CAPS), found in Bos taurus (Bovine).